The sequence spans 240 residues: Pyridoxine 5'-phosphate synthase (240 aa).

Residue N7 coordinates 3-amino-2-oxopropyl phosphate. D9 to H10 lines the 1-deoxy-D-xylulose 5-phosphate pocket. R18 provides a ligand contact to 3-amino-2-oxopropyl phosphate. H43 functions as the Proton acceptor in the catalytic mechanism. Residues R45 and H50 each coordinate 1-deoxy-D-xylulose 5-phosphate. Residue E70 is the Proton acceptor of the active site. Position 100 (T100) interacts with 1-deoxy-D-xylulose 5-phosphate. The Proton donor role is filled by H191. 3-amino-2-oxopropyl phosphate is bound by residues G192 and G213–H214.

It belongs to the PNP synthase family. Homooctamer; tetramer of dimers.

It is found in the cytoplasm. It catalyses the reaction 3-amino-2-oxopropyl phosphate + 1-deoxy-D-xylulose 5-phosphate = pyridoxine 5'-phosphate + phosphate + 2 H2O + H(+). The protein operates within cofactor biosynthesis; pyridoxine 5'-phosphate biosynthesis; pyridoxine 5'-phosphate from D-erythrose 4-phosphate: step 5/5. Functionally, catalyzes the complicated ring closure reaction between the two acyclic compounds 1-deoxy-D-xylulose-5-phosphate (DXP) and 3-amino-2-oxopropyl phosphate (1-amino-acetone-3-phosphate or AAP) to form pyridoxine 5'-phosphate (PNP) and inorganic phosphate. The sequence is that of Pyridoxine 5'-phosphate synthase from Coxiella burnetii (strain Dugway 5J108-111).